We begin with the raw amino-acid sequence, 197 residues long: Recombination protein RecR (197 aa).

A C4-type zinc finger spans residues 56–71; the sequence is CSRCFNLSAEDPCDIC. The 96-residue stretch at 79–174 folds into the Toprim domain; sequence ETICVVAEPR…RVTRIAFGLP (96 aa).

The protein belongs to the RecR family.

Functionally, may play a role in DNA repair. It seems to be involved in an RecBC-independent recombinational process of DNA repair. It may act with RecF and RecO. In Gloeobacter violaceus (strain ATCC 29082 / PCC 7421), this protein is Recombination protein RecR.